We begin with the raw amino-acid sequence, 251 residues long: Ubiquinone/menaquinone biosynthesis C-methyltransferase UbiE (251 aa).

S-adenosyl-L-methionine is bound by residues Thr74, Asp95, 123 to 124, and Ser140; that span reads NA.

Belongs to the class I-like SAM-binding methyltransferase superfamily. MenG/UbiE family.

It carries out the reaction a 2-demethylmenaquinol + S-adenosyl-L-methionine = a menaquinol + S-adenosyl-L-homocysteine + H(+). It catalyses the reaction a 2-methoxy-6-(all-trans-polyprenyl)benzene-1,4-diol + S-adenosyl-L-methionine = a 5-methoxy-2-methyl-3-(all-trans-polyprenyl)benzene-1,4-diol + S-adenosyl-L-homocysteine + H(+). The protein operates within quinol/quinone metabolism; menaquinone biosynthesis; menaquinol from 1,4-dihydroxy-2-naphthoate: step 2/2. It participates in cofactor biosynthesis; ubiquinone biosynthesis. Its function is as follows. Methyltransferase required for the conversion of demethylmenaquinol (DMKH2) to menaquinol (MKH2) and the conversion of 2-polyprenyl-6-methoxy-1,4-benzoquinol (DDMQH2) to 2-polyprenyl-3-methyl-6-methoxy-1,4-benzoquinol (DMQH2). This Escherichia coli O9:H4 (strain HS) protein is Ubiquinone/menaquinone biosynthesis C-methyltransferase UbiE.